The following is a 162-amino-acid chain: Protein archease (162 aa).

The Ca(2+) site is built by Asp34, Asp161, and Ile162.

Belongs to the archease family. Component of the tRNA-splicing ligase complex.

Functionally, component of the tRNA-splicing ligase complex required to facilitate the enzymatic turnover of catalytic subunit RTCB. Together with ddx1, acts by facilitating the guanylylation of RTCB, a key intermediate step in tRNA ligation. In Danio rerio (Zebrafish), this protein is Protein archease (zbtb8os).